The primary structure comprises 705 residues: Phosphoribosylformylglycinamidine synthase subunit PurL (705 aa).

The active site involves His-32. Residue Tyr-35 participates in ATP binding. Glu-76 is a Mg(2+) binding site. Substrate contacts are provided by residues 77–80 (SHNH) and Arg-99. The Proton acceptor role is filled by His-78. Asp-100 is a Mg(2+) binding site. Gln-224 is a binding site for substrate. Asp-252 contacts Mg(2+). Residue 296 to 298 (ESQ) participates in substrate binding. ATP contacts are provided by Asp-471 and Gly-508. Residue Asn-509 coordinates Mg(2+). Residue Ser-511 participates in substrate binding.

The protein belongs to the FGAMS family. Monomer. Part of the FGAM synthase complex composed of 1 PurL, 1 PurQ and 2 PurS subunits.

The protein localises to the cytoplasm. The enzyme catalyses N(2)-formyl-N(1)-(5-phospho-beta-D-ribosyl)glycinamide + L-glutamine + ATP + H2O = 2-formamido-N(1)-(5-O-phospho-beta-D-ribosyl)acetamidine + L-glutamate + ADP + phosphate + H(+). It participates in purine metabolism; IMP biosynthesis via de novo pathway; 5-amino-1-(5-phospho-D-ribosyl)imidazole from N(2)-formyl-N(1)-(5-phospho-D-ribosyl)glycinamide: step 1/2. In terms of biological role, part of the phosphoribosylformylglycinamidine synthase complex involved in the purines biosynthetic pathway. Catalyzes the ATP-dependent conversion of formylglycinamide ribonucleotide (FGAR) and glutamine to yield formylglycinamidine ribonucleotide (FGAM) and glutamate. The FGAM synthase complex is composed of three subunits. PurQ produces an ammonia molecule by converting glutamine to glutamate. PurL transfers the ammonia molecule to FGAR to form FGAM in an ATP-dependent manner. PurS interacts with PurQ and PurL and is thought to assist in the transfer of the ammonia molecule from PurQ to PurL. The protein is Phosphoribosylformylglycinamidine synthase subunit PurL of Pyrococcus abyssi (strain GE5 / Orsay).